The primary structure comprises 289 residues: ATP synthase gamma chain (289 aa).

This sequence belongs to the ATPase gamma chain family. In terms of assembly, F-type ATPases have 2 components, CF(1) - the catalytic core - and CF(0) - the membrane proton channel. CF(1) has five subunits: alpha(3), beta(3), gamma(1), delta(1), epsilon(1). CF(0) has three main subunits: a, b and c.

The protein resides in the cell inner membrane. Functionally, produces ATP from ADP in the presence of a proton gradient across the membrane. The gamma chain is believed to be important in regulating ATPase activity and the flow of protons through the CF(0) complex. This chain is ATP synthase gamma chain, found in Histophilus somni (strain 129Pt) (Haemophilus somnus).